Reading from the N-terminus, the 185-residue chain is uncharacterized protein (185 aa).

Transmembrane regions (helical) follow at residues 4 to 24 (IAWM…LGLA), 35 to 55 (GLLF…ATGV), 60 to 80 (GASA…SIAY), 123 to 143 (VLAY…INDS), and 152 to 172 (ILKL…SYFI).

The protein resides in the cell membrane. This is an uncharacterized protein from Bacillus subtilis (strain 168).